A 51-amino-acid polypeptide reads, in one-letter code: Large ribosomal subunit protein eL39 (51 aa).

This sequence belongs to the eukaryotic ribosomal protein eL39 family.

This chain is Large ribosomal subunit protein eL39 (rpl39e), found in Methanothermobacter thermautotrophicus (strain ATCC 29096 / DSM 1053 / JCM 10044 / NBRC 100330 / Delta H) (Methanobacterium thermoautotrophicum).